The chain runs to 132 residues: MSMTDPIADMLTRIRNASMAKLQKVDIPSSNLKVSLANVLKAEGFIKNFKVIADNKQGVLRVYLRFIDEKEPVIREIKRVSKPGSRVYVGSDEIPSVKSGMGVAILSTSKGILTDKVAREAGVGGEVICTVW.

It belongs to the universal ribosomal protein uS8 family. Part of the 30S ribosomal subunit. Contacts proteins S5 and S12.

Its function is as follows. One of the primary rRNA binding proteins, it binds directly to 16S rRNA central domain where it helps coordinate assembly of the platform of the 30S subunit. In Geobacter metallireducens (strain ATCC 53774 / DSM 7210 / GS-15), this protein is Small ribosomal subunit protein uS8.